Here is a 645-residue protein sequence, read N- to C-terminus: Threonine--tRNA ligase (645 aa).

A TGS domain is found at 1–61; it reads MIKITLPDGS…TSDSTVQLLT (61 aa). The catalytic stretch occupies residues 242 to 541; the sequence is DHRKLGKELE…LIEHVAGNFP (300 aa). 3 residues coordinate Zn(2+): Cys337, His388, and His518.

The protein belongs to the class-II aminoacyl-tRNA synthetase family. In terms of assembly, homodimer. Zn(2+) is required as a cofactor.

It localises to the cytoplasm. The catalysed reaction is tRNA(Thr) + L-threonine + ATP = L-threonyl-tRNA(Thr) + AMP + diphosphate + H(+). Functionally, catalyzes the attachment of threonine to tRNA(Thr) in a two-step reaction: L-threonine is first activated by ATP to form Thr-AMP and then transferred to the acceptor end of tRNA(Thr). Also edits incorrectly charged L-seryl-tRNA(Thr). The polypeptide is Threonine--tRNA ligase (Cytophaga hutchinsonii (strain ATCC 33406 / DSM 1761 / CIP 103989 / NBRC 15051 / NCIMB 9469 / D465)).